The following is a 360-amino-acid chain: Membrane-bound lytic murein transglycosylase C (360 aa).

The signal sequence occupies residues 1-16; that stretch reads MKKYLALALIAPLLVS. The N-palmitoyl cysteine moiety is linked to residue C17. The S-diacylglycerol cysteine moiety is linked to residue C17.

This sequence belongs to the transglycosylase Slt family.

The protein resides in the cell outer membrane. It carries out the reaction Exolytic cleavage of the (1-&gt;4)-beta-glycosidic linkage between N-acetylmuramic acid (MurNAc) and N-acetylglucosamine (GlcNAc) residues in peptidoglycan, from either the reducing or the non-reducing ends of the peptidoglycan chains, with concomitant formation of a 1,6-anhydrobond in the MurNAc residue.. Murein-degrading enzyme. May play a role in recycling of muropeptides during cell elongation and/or cell division. In Klebsiella pneumoniae (strain 342), this protein is Membrane-bound lytic murein transglycosylase C.